The primary structure comprises 164 residues: ATP synthase subunit b 2 (164 aa).

The helical transmembrane segment at threonine 4–proline 24 threads the bilayer.

The protein belongs to the ATPase B chain family. F-type ATPases have 2 components, F(1) - the catalytic core - and F(0) - the membrane proton channel. F(1) has five subunits: alpha(3), beta(3), gamma(1), delta(1), epsilon(1). F(0) has three main subunits: a(1), b(2) and c(10-14). The alpha and beta chains form an alternating ring which encloses part of the gamma chain. F(1) is attached to F(0) by a central stalk formed by the gamma and epsilon chains, while a peripheral stalk is formed by the delta and b chains.

It is found in the cell inner membrane. Functionally, f(1)F(0) ATP synthase produces ATP from ADP in the presence of a proton or sodium gradient. F-type ATPases consist of two structural domains, F(1) containing the extramembraneous catalytic core and F(0) containing the membrane proton channel, linked together by a central stalk and a peripheral stalk. During catalysis, ATP synthesis in the catalytic domain of F(1) is coupled via a rotary mechanism of the central stalk subunits to proton translocation. Its function is as follows. Component of the F(0) channel, it forms part of the peripheral stalk, linking F(1) to F(0). The polypeptide is ATP synthase subunit b 2 (Bartonella tribocorum (strain CIP 105476 / IBS 506)).